A 163-amino-acid polypeptide reads, in one-letter code: Protein-export protein SecB (163 aa).

It belongs to the SecB family. In terms of assembly, homotetramer, a dimer of dimers. One homotetramer interacts with 1 SecA dimer.

The protein resides in the cytoplasm. In terms of biological role, one of the proteins required for the normal export of preproteins out of the cell cytoplasm. It is a molecular chaperone that binds to a subset of precursor proteins, maintaining them in a translocation-competent state. It also specifically binds to its receptor SecA. This Caulobacter vibrioides (strain ATCC 19089 / CIP 103742 / CB 15) (Caulobacter crescentus) protein is Protein-export protein SecB.